The primary structure comprises 510 residues: Beta-galactosidase (510 aa).

E210 functions as the Proton donor in the catalytic mechanism. E414 functions as the Nucleophile in the catalytic mechanism.

The protein belongs to the glycosyl hydrolase 1 family.

It carries out the reaction Hydrolysis of terminal non-reducing beta-D-galactose residues in beta-D-galactosides.. In Pyrococcus woesei, this protein is Beta-galactosidase.